The primary structure comprises 119 residues: Large ribosomal subunit protein uL18 (119 aa).

It belongs to the universal ribosomal protein uL18 family. Part of the 50S ribosomal subunit; part of the 5S rRNA/L5/L18/L25 subcomplex. Contacts the 5S and 23S rRNAs.

Its function is as follows. This is one of the proteins that bind and probably mediate the attachment of the 5S RNA into the large ribosomal subunit, where it forms part of the central protuberance. The sequence is that of Large ribosomal subunit protein uL18 from Chlorobium phaeovibrioides (strain DSM 265 / 1930) (Prosthecochloris vibrioformis (strain DSM 265)).